The chain runs to 169 residues: S-ribosylhomocysteine lyase (169 aa).

His-54, His-58, and Cys-128 together coordinate Fe cation.

This sequence belongs to the LuxS family. In terms of assembly, homodimer. It depends on Fe cation as a cofactor.

It carries out the reaction S-(5-deoxy-D-ribos-5-yl)-L-homocysteine = (S)-4,5-dihydroxypentane-2,3-dione + L-homocysteine. Functionally, involved in the synthesis of autoinducer 2 (AI-2) which is secreted by bacteria and is used to communicate both the cell density and the metabolic potential of the environment. The regulation of gene expression in response to changes in cell density is called quorum sensing. Catalyzes the transformation of S-ribosylhomocysteine (RHC) to homocysteine (HC) and 4,5-dihydroxy-2,3-pentadione (DPD). The protein is S-ribosylhomocysteine lyase of Sulfurovum sp. (strain NBC37-1).